A 425-amino-acid polypeptide reads, in one-letter code: MAAASSFTAAAKFLAPVSARSAGDYKPPLPLPASASLRPGRKPAPRLRTALAVSSDVLPGNKAAPAAAAHSAVTREEALELYEDMVLGRIFEDMCAQMYYRGKMFGFVHLYNGQEAVSTGFIKLLNQADCVVSTYRDHVHALSKGVPARSVMAELFGKATGCCRGQGGSMHMFSEPHNLLGGFAFIGEGIPVATGAAFAAKYRHEVLKQSSPDGLDVTLAFFGDGTCNNGQFFECLNMAQLWKLPIVFVVENNLWAIGMSHLRATSDPEIYKKGPAFGMPGVHVDGMDVLKVREVAKEAIERARRGEGPTLVECETYRFRGHSLADPDELRRPDEKSHYAARDPITALKKYIIEQNLATESELKSIEKKIDDVVEEAVEFADASPLPPRSQLLENVFSDPKGFGIGPDGKYRCEDPLFTQGTAQV.

A chloroplast-targeting transit peptide spans 1-66 (MAAASSFTAA…VLPGNKAAPA (66 aa)). Pyruvate contacts are provided by H109, Y135, R136, A184, I186, D224, G225, and N253. Y135, R136, A184, I186, D224, G225, N253, and H322 together coordinate thiamine diphosphate. D224 contributes to the Mg(2+) binding site. N253 contributes to the Mg(2+) binding site.

Tetramer of 2 alpha and 2 beta subunits. Thiamine diphosphate is required as a cofactor. Mg(2+) serves as cofactor.

It is found in the plastid. Its subcellular location is the chloroplast. The enzyme catalyses N(6)-[(R)-lipoyl]-L-lysyl-[protein] + pyruvate + H(+) = N(6)-[(R)-S(8)-acetyldihydrolipoyl]-L-lysyl-[protein] + CO2. In terms of biological role, the pyruvate dehydrogenase complex catalyzes the overall conversion of pyruvate to acetyl-CoA and CO(2). It contains multiple copies of three enzymatic components: pyruvate dehydrogenase (E1), dihydrolipoamide acetyltransferase (E2) and lipoamide dehydrogenase (E3). This Oryza sativa subsp. japonica (Rice) protein is Pyruvate dehydrogenase E1 component subunit alpha-3, chloroplastic.